The sequence spans 355 residues: Holliday junction branch migration complex subunit RuvB (355 aa).

The large ATPase domain (RuvB-L) stretch occupies residues 4 to 190 (TDKLAAERII…FGIVARLEFY (187 aa)). ATP is bound by residues Leu-29, Arg-30, Gly-71, Lys-74, Thr-75, Thr-76, 137–139 (EDY), Arg-180, Tyr-190, and Arg-227. Residue Thr-75 coordinates Mg(2+). The interval 191 to 261 (DAEQLSRIVR…VADAALAMLD (71 aa)) is small ATPAse domain (RuvB-S). The head domain (RuvB-H) stretch occupies residues 264–355 (PVGFDLMDRK…GSMWNTPDGA (92 aa)). The DNA site is built by Arg-300, Arg-319, and Arg-324.

Belongs to the RuvB family. In terms of assembly, homohexamer. Forms an RuvA(8)-RuvB(12)-Holliday junction (HJ) complex. HJ DNA is sandwiched between 2 RuvA tetramers; dsDNA enters through RuvA and exits via RuvB. An RuvB hexamer assembles on each DNA strand where it exits the tetramer. Each RuvB hexamer is contacted by two RuvA subunits (via domain III) on 2 adjacent RuvB subunits; this complex drives branch migration. In the full resolvosome a probable DNA-RuvA(4)-RuvB(12)-RuvC(2) complex forms which resolves the HJ.

The protein localises to the cytoplasm. It catalyses the reaction ATP + H2O = ADP + phosphate + H(+). Its function is as follows. The RuvA-RuvB-RuvC complex processes Holliday junction (HJ) DNA during genetic recombination and DNA repair, while the RuvA-RuvB complex plays an important role in the rescue of blocked DNA replication forks via replication fork reversal (RFR). RuvA specifically binds to HJ cruciform DNA, conferring on it an open structure. The RuvB hexamer acts as an ATP-dependent pump, pulling dsDNA into and through the RuvAB complex. RuvB forms 2 homohexamers on either side of HJ DNA bound by 1 or 2 RuvA tetramers; 4 subunits per hexamer contact DNA at a time. Coordinated motions by a converter formed by DNA-disengaged RuvB subunits stimulates ATP hydrolysis and nucleotide exchange. Immobilization of the converter enables RuvB to convert the ATP-contained energy into a lever motion, pulling 2 nucleotides of DNA out of the RuvA tetramer per ATP hydrolyzed, thus driving DNA branch migration. The RuvB motors rotate together with the DNA substrate, which together with the progressing nucleotide cycle form the mechanistic basis for DNA recombination by continuous HJ branch migration. Branch migration allows RuvC to scan DNA until it finds its consensus sequence, where it cleaves and resolves cruciform DNA. The polypeptide is Holliday junction branch migration complex subunit RuvB (Burkholderia vietnamiensis (strain G4 / LMG 22486) (Burkholderia cepacia (strain R1808))).